The chain runs to 187 residues: Dirigent protein 23 (187 aa).

The signal sequence occupies residues 1 to 24 (MAKEEYVSRMLVMLIMIMPLVAQG). Asn182 carries N-linked (GlcNAc...) asparagine glycosylation.

It belongs to the plant dirigent protein family. As to quaternary structure, homodimer.

It localises to the secreted. It is found in the extracellular space. Its subcellular location is the apoplast. In terms of biological role, dirigent proteins impart stereoselectivity on the phenoxy radical-coupling reaction, yielding optically active lignans from two molecules of coniferyl alcohol in the biosynthesis of lignans, flavonolignans, and alkaloids and thus plays a central role in plant secondary metabolism. The sequence is that of Dirigent protein 23 (DIR23) from Arabidopsis thaliana (Mouse-ear cress).